The primary structure comprises 140 residues: Small ribosomal subunit protein uS12m (140 aa).

It belongs to the universal ribosomal protein uS12 family.

The protein resides in the mitochondrion. The sequence is that of Small ribosomal subunit protein uS12m (mrps12) from Dictyostelium discoideum (Social amoeba).